A 331-amino-acid chain; its full sequence is Ribosomal RNA small subunit methyltransferase H (331 aa).

Residues 39 to 41 (GGY), D56, F83, D100, and Q107 each bind S-adenosyl-L-methionine.

This sequence belongs to the methyltransferase superfamily. RsmH family.

Its subcellular location is the cytoplasm. The enzyme catalyses cytidine(1402) in 16S rRNA + S-adenosyl-L-methionine = N(4)-methylcytidine(1402) in 16S rRNA + S-adenosyl-L-homocysteine + H(+). In terms of biological role, specifically methylates the N4 position of cytidine in position 1402 (C1402) of 16S rRNA. This Bartonella bacilliformis (strain ATCC 35685 / KC583 / Herrer 020/F12,63) protein is Ribosomal RNA small subunit methyltransferase H.